The sequence spans 349 residues: 4-hydroxy-3-methylbut-2-en-1-yl diphosphate synthase (flavodoxin) (349 aa).

Residues Cys-265, Cys-268, Cys-300, and Glu-307 each contribute to the [4Fe-4S] cluster site.

This sequence belongs to the IspG family. Requires [4Fe-4S] cluster as cofactor.

It catalyses the reaction (2E)-4-hydroxy-3-methylbut-2-enyl diphosphate + oxidized [flavodoxin] + H2O + 2 H(+) = 2-C-methyl-D-erythritol 2,4-cyclic diphosphate + reduced [flavodoxin]. The protein operates within isoprenoid biosynthesis; isopentenyl diphosphate biosynthesis via DXP pathway; isopentenyl diphosphate from 1-deoxy-D-xylulose 5-phosphate: step 5/6. Functionally, converts 2C-methyl-D-erythritol 2,4-cyclodiphosphate (ME-2,4cPP) into 1-hydroxy-2-methyl-2-(E)-butenyl 4-diphosphate. The protein is 4-hydroxy-3-methylbut-2-en-1-yl diphosphate synthase (flavodoxin) of Thermodesulfovibrio yellowstonii (strain ATCC 51303 / DSM 11347 / YP87).